Reading from the N-terminus, the 107-residue chain is uncharacterized protein (107 aa).

The protein localises to the mitochondrion. This is an uncharacterized protein from Arabidopsis thaliana (Mouse-ear cress).